The chain runs to 383 residues: Processive diacylglycerol beta-glucosyltransferase (383 aa).

Belongs to the glycosyltransferase 28 family. UgtP subfamily.

The protein localises to the cell membrane. The enzyme catalyses a 1,2-diacyl-3-O-(beta-D-glucopyranosyl)-sn-glycerol + UDP-alpha-D-glucose = a 1,2-diacyl-3-O-(beta-D-Glc-(1-&gt;6)-beta-D-Glc)-sn-glycerol + UDP + H(+). It carries out the reaction a 1,2-diacyl-3-O-(beta-D-Glc-(1-&gt;6)-beta-D-Glc)-sn-glycerol + UDP-alpha-D-glucose = a 1,2-diacyl-3-O-(beta-D-Glc-(1-&gt;6)-beta-D-Glc-(1-&gt;6)-beta-D-Glc)-sn-glycerol + UDP + H(+). The catalysed reaction is a 1,2-diacyl-sn-glycerol + UDP-alpha-D-glucose = a 1,2-diacyl-3-O-(beta-D-glucopyranosyl)-sn-glycerol + UDP + H(+). It participates in glycolipid metabolism; diglucosyl-diacylglycerol biosynthesis. Its function is as follows. Processive glucosyltransferase involved in the biosynthesis of both the bilayer- and non-bilayer-forming membrane glucolipids. Is able to successively transfer up to three glucosyl residues to diacylglycerol (DAG), thereby catalyzing the formation of beta-monoglucosyl-DAG (3-O-(beta-D-glucopyranosyl)-1,2-diacyl-sn-glycerol), beta-diglucosyl-DAG (3-O-(beta-D-glucopyranosyl-beta-(1-&gt;6)-D-glucopyranosyl)-1,2-diacyl-sn-glycerol) and beta-triglucosyl-DAG (3-O-(beta-D-glucopyranosyl-beta-(1-&gt;6)-D-glucopyranosyl-beta-(1-&gt;6)-D-glucopyranosyl)-1,2-diacyl-sn-glycerol). Beta-diglucosyl-DAG is the predominant glycolipid found in Bacillales and is also used as a membrane anchor for lipoteichoic acid (LTA). This Bacillus licheniformis (strain ATCC 14580 / DSM 13 / JCM 2505 / CCUG 7422 / NBRC 12200 / NCIMB 9375 / NCTC 10341 / NRRL NRS-1264 / Gibson 46) protein is Processive diacylglycerol beta-glucosyltransferase.